Here is a 510-residue protein sequence, read N- to C-terminus: Leucine-rich repeat-containing protein 14B (510 aa).

The LRR 1; degenerate repeat unit spans residues 100–137 (SNRLRVADFTGIQDVQVQQCPCGRALGRWGRTKVLART). The LRR 2; degenerate repeat unit spans residues 181–205 (QVCCPSLRADSLSPGQLLQVLGLAG). An LRR 4; degenerate repeat occupies 234–273 (FPQLTSLTLPTKAFDAPPTCAPDPEGEDLLLTSIAWELSQ). 5 LRR repeats span residues 274 to 298 (MNQL…LSPL), 299 to 330 (KTPL…AHLE), 331 to 349 (VLDL…TFFR), 355 to 382 (AQTL…GLSP), and 383 to 407 (CSQL…LFAA).

The protein belongs to the PRAME family. LRRC14 subfamily.

The chain is Leucine-rich repeat-containing protein 14B from Mus musculus (Mouse).